Reading from the N-terminus, the 306-residue chain is tRNA pseudouridine synthase B (306 aa).

Aspartate 43 serves as the catalytic Nucleophile.

The protein belongs to the pseudouridine synthase TruB family. Type 1 subfamily.

The catalysed reaction is uridine(55) in tRNA = pseudouridine(55) in tRNA. Functionally, responsible for synthesis of pseudouridine from uracil-55 in the psi GC loop of transfer RNAs. The chain is tRNA pseudouridine synthase B from Lacticaseibacillus casei (strain BL23) (Lactobacillus casei).